The chain runs to 62 residues: Large ribosomal subunit protein eL37 (62 aa).

C20, C23, C35, and C38 together coordinate Zn(2+). The C4-type zinc-finger motif lies at 20–38 (CRRCGRHSFNVAKGYCAAC).

The protein belongs to the eukaryotic ribosomal protein eL37 family. The cofactor is Zn(2+).

Binds to the 23S rRNA. The sequence is that of Large ribosomal subunit protein eL37 from Desulfurococcus amylolyticus (strain DSM 18924 / JCM 16383 / VKM B-2413 / 1221n) (Desulfurococcus kamchatkensis).